We begin with the raw amino-acid sequence, 429 residues long: Enolase (429 aa).

Glutamine 167 provides a ligand contact to (2R)-2-phosphoglycerate. Residue glutamate 209 is the Proton donor of the active site. Mg(2+) contacts are provided by aspartate 246, glutamate 289, and aspartate 316. Residues lysine 341, arginine 370, serine 371, and lysine 392 each coordinate (2R)-2-phosphoglycerate. Lysine 341 functions as the Proton acceptor in the catalytic mechanism.

Belongs to the enolase family. In terms of assembly, component of the RNA degradosome, a multiprotein complex involved in RNA processing and mRNA degradation. Requires Mg(2+) as cofactor.

The protein resides in the cytoplasm. Its subcellular location is the secreted. It is found in the cell surface. The catalysed reaction is (2R)-2-phosphoglycerate = phosphoenolpyruvate + H2O. Its pathway is carbohydrate degradation; glycolysis; pyruvate from D-glyceraldehyde 3-phosphate: step 4/5. Functionally, catalyzes the reversible conversion of 2-phosphoglycerate (2-PG) into phosphoenolpyruvate (PEP). It is essential for the degradation of carbohydrates via glycolysis. The chain is Enolase from Pseudomonas putida (strain ATCC 47054 / DSM 6125 / CFBP 8728 / NCIMB 11950 / KT2440).